The sequence spans 528 residues: Inositol-3-phosphate synthase (528 aa).

22 residues coordinate NAD(+): G66, G67, N68, N69, D140, Q187, R190, T228, A229, N230, T231, G279, D304, S307, N338, N339, D340, K353, G392, D393, D421, and S422.

Belongs to the myo-inositol 1-phosphate synthase family. NAD(+) serves as cofactor.

The protein resides in the cytoplasm. It localises to the cytosol. It carries out the reaction D-glucose 6-phosphate = 1D-myo-inositol 3-phosphate. It functions in the pathway polyol metabolism; myo-inositol biosynthesis; myo-inositol from D-glucose 6-phosphate: step 1/2. Its activity is regulated as follows. Activated by ammonium ions. Its function is as follows. Key enzyme in myo-inositol biosynthesis pathway that catalyzes the conversion of glucose 6-phosphate to 1-myo-inositol 1-phosphate in a NAD-dependent manner. Rate-limiting enzyme in the synthesis of all inositol-containing compounds. De novo-synthesized myo-inositol is essential for incorporation into GPI (glycosylphosphatidylinositol) glycolipids in the bloodstream form. The sequence is that of Inositol-3-phosphate synthase from Trypanosoma brucei brucei.